Reading from the N-terminus, the 131-residue chain is Binder of sperm protein homolog 2 (131 aa).

The signal sequence occupies residues 1-22 (MEVMSHLVHWVFLAVYMYELNA). 2 Fibronectin type-II domains span residues 35–79 (ISTD…YCTA) and 80–128 (QDPP…QCSP). 4 disulfides stabilise this stretch: C40–C64, C54–C77, C85–C111, and C99–C126.

The protein belongs to the seminal plasma protein family. Epididymis.

Its subcellular location is the secreted. Functionally, binds sperm in vitro but has no effect on sperm capacitation. Also binds gelatin and heparin, but not chondroitin sulfate B or phospholipid liposomes. This chain is Binder of sperm protein homolog 2, found in Mus musculus (Mouse).